The sequence spans 290 residues: 4-hydroxy-tetrahydrodipicolinate synthase (290 aa).

A pyruvate-binding site is contributed by T44. Catalysis depends on Y132, which acts as the Proton donor/acceptor. The active-site Schiff-base intermediate with substrate is K160. Position 202 (I202) interacts with pyruvate.

The protein belongs to the DapA family. In terms of assembly, homotetramer; dimer of dimers.

The protein resides in the cytoplasm. It catalyses the reaction L-aspartate 4-semialdehyde + pyruvate = (2S,4S)-4-hydroxy-2,3,4,5-tetrahydrodipicolinate + H2O + H(+). Its pathway is amino-acid biosynthesis; L-lysine biosynthesis via DAP pathway; (S)-tetrahydrodipicolinate from L-aspartate: step 3/4. Its function is as follows. Catalyzes the condensation of (S)-aspartate-beta-semialdehyde [(S)-ASA] and pyruvate to 4-hydroxy-tetrahydrodipicolinate (HTPA). The protein is 4-hydroxy-tetrahydrodipicolinate synthase of Ruegeria pomeroyi (strain ATCC 700808 / DSM 15171 / DSS-3) (Silicibacter pomeroyi).